We begin with the raw amino-acid sequence, 581 residues long: Chaperonin GroEL 1 (581 aa).

Residues Thr-29–Pro-32, Asp-86–Thr-90, Gly-413, and Asp-492 contribute to the ATP site.

Belongs to the chaperonin (HSP60) family. Forms a cylinder of 14 subunits composed of two heptameric rings stacked back-to-back. Interacts with the co-chaperonin GroES.

It is found in the cytoplasm. The catalysed reaction is ATP + H2O + a folded polypeptide = ADP + phosphate + an unfolded polypeptide.. In terms of biological role, together with its co-chaperonin GroES, plays an essential role in assisting protein folding. The GroEL-GroES system forms a nano-cage that allows encapsulation of the non-native substrate proteins and provides a physical environment optimized to promote and accelerate protein folding. The chain is Chaperonin GroEL 1 from Prochlorococcus marinus subsp. pastoris (strain CCMP1986 / NIES-2087 / MED4).